A 163-amino-acid chain; its full sequence is Ribosome maturation factor RimM (163 aa).

A PRC barrel domain is found at 92–161; that stretch reads PGEYYHHDLI…AETVTVNAAF (70 aa).

It belongs to the RimM family. As to quaternary structure, binds ribosomal protein uS19.

It is found in the cytoplasm. In terms of biological role, an accessory protein needed during the final step in the assembly of 30S ribosomal subunit, possibly for assembly of the head region. Essential for efficient processing of 16S rRNA. May be needed both before and after RbfA during the maturation of 16S rRNA. It has affinity for free ribosomal 30S subunits but not for 70S ribosomes. This chain is Ribosome maturation factor RimM, found in Sphingopyxis alaskensis (strain DSM 13593 / LMG 18877 / RB2256) (Sphingomonas alaskensis).